A 428-amino-acid polypeptide reads, in one-letter code: Histidine--tRNA ligase (428 aa).

This sequence belongs to the class-II aminoacyl-tRNA synthetase family. As to quaternary structure, homodimer.

Its subcellular location is the cytoplasm. It catalyses the reaction tRNA(His) + L-histidine + ATP = L-histidyl-tRNA(His) + AMP + diphosphate + H(+). The protein is Histidine--tRNA ligase of Thermosynechococcus vestitus (strain NIES-2133 / IAM M-273 / BP-1).